The primary structure comprises 725 residues: Catalase-peroxidase (725 aa).

The tract at residues 1–20 (MSSEAKCPFPHAANRSRSNQ) is disordered. The segment at residues 91–215 (WHATGTYRTM…LSATHMGLIY (125 aa)) is a cross-link (tryptophyl-tyrosyl-methioninium (Trp-Tyr) (with M-241)). His92 serves as the catalytic Proton acceptor. A cross-link (tryptophyl-tyrosyl-methioninium (Tyr-Met) (with W-91)) is located at residues 215 to 241 (YVNPEGPDGSGDYMAAAKDIRATFYRM). A heme b-binding site is contributed by His256.

The protein belongs to the peroxidase family. Peroxidase/catalase subfamily. In terms of assembly, homodimer or homotetramer. Heme b serves as cofactor. Post-translationally, formation of the three residue Trp-Tyr-Met cross-link is important for the catalase, but not the peroxidase activity of the enzyme.

The enzyme catalyses H2O2 + AH2 = A + 2 H2O. It catalyses the reaction 2 H2O2 = O2 + 2 H2O. Bifunctional enzyme with both catalase and broad-spectrum peroxidase activity. The sequence is that of Catalase-peroxidase from Janthinobacterium sp. (strain Marseille) (Minibacterium massiliensis).